The sequence spans 440 residues: uncharacterized protein (440 aa).

A run of 12 helical transmembrane segments spans residues 24–44, 47–67, 93–113, 117–137, 155–175, 183–203, 229–249, 276–296, 323–343, 346–366, 379–399, and 400–420; these read VVIG…APAA, AGSG…CNAI, FWGY…CAAM, VGFY…VVAL, IVAV…GSGA, IGVD…FFAF, LALG…IAVL, VVQI…ILGV, PFRA…TADI, AIGF…ASAL, IPLV…LSSV, and AAGA…RIIT.

This sequence belongs to the amino acid-polyamine-organocation (APC) superfamily.

The protein localises to the cell membrane. In terms of biological role, probable amino-acid or metabolite transport protein. This is an uncharacterized protein from Mycobacterium bovis (strain ATCC BAA-935 / AF2122/97).